The primary structure comprises 154 residues: Transcriptional repressor NrdR (154 aa).

Residues 1–22 (MECPNCHKNASRVIDSRPSDEN) are disordered. A zinc finger spans residues 3–34 (CPNCHKNASRVIDSRPSDENRAIRRRRECENC). The ATP-cone domain maps to 49–139 (LLVIKNDGTR…IYRQFKDVSG (91 aa)).

Belongs to the NrdR family. It depends on Zn(2+) as a cofactor.

Negatively regulates transcription of bacterial ribonucleotide reductase nrd genes and operons by binding to NrdR-boxes. In Lactobacillus gasseri (strain ATCC 33323 / DSM 20243 / BCRC 14619 / CIP 102991 / JCM 1131 / KCTC 3163 / NCIMB 11718 / NCTC 13722 / AM63), this protein is Transcriptional repressor NrdR.